Consider the following 257-residue polypeptide: Golgi SNAP receptor complex member 1-2 (257 aa).

Residues 1 to 235 lie on the Cytoplasmic side of the membrane; it reads MTESSLDLQE…GSIKRKRSRD (235 aa). Asn-51 is subject to Phosphoserine. A coiled-coil region spans residues 113-147; it reads TQKLARHRDILHEYTQEFRRIKGNINSLREHAELL. A helical; Anchor for type IV membrane protein membrane pass occupies residues 236–256; sequence TLILSAVIAACTLFLIIYWLS. Position 257 (Lys-257) is a topological domain, vesicular.

The protein belongs to the GOSR1 family. In terms of assembly, component of several multiprotein Golgi SNARE complexes.

Its subcellular location is the golgi apparatus membrane. It localises to the endoplasmic reticulum membrane. Functionally, involved in transport from the ER to the Golgi apparatus as well as in intra-Golgi transport. It belongs to a super-family of proteins called t-SNAREs or soluble NSF (N-ethylmaleimide-sensitive factor) attachment protein receptor. The chain is Golgi SNAP receptor complex member 1-2 (GOS12) from Arabidopsis thaliana (Mouse-ear cress).